The sequence spans 354 residues: Guanine nucleotide-binding protein G(i) subunit alpha-3 (354 aa).

Glycine 2 carries the N-myristoyl glycine lipid modification. The S-palmitoyl cysteine moiety is linked to residue cysteine 3. The region spanning 32–354 is the G-alpha domain; that stretch reads KEVKLLLLGA…KNNLKECGLY (323 aa). The interval 35-48 is G1 motif; the sequence is KLLLLGAGESGKST. Residues glycine 42, glutamate 43, serine 44, glycine 45, lysine 46, serine 47, threonine 48, aspartate 150, serine 151, leucine 175, arginine 176, threonine 177, arginine 178, valine 179, lysine 180, threonine 181, valine 201, and glycine 203 each contribute to the GTP site. Glutamate 43, serine 44, glycine 45, lysine 46, serine 47, and threonine 48 together coordinate GDP. Serine 47 contacts Mg(2+). 5 residues coordinate GDP: serine 151, leucine 175, arginine 176, threonine 177, and arginine 178. The tract at residues 173–181 is G2 motif; sequence DVLRTRVKT. An ADP-ribosylarginine; by cholera toxin modification is found at arginine 178. A Mg(2+)-binding site is contributed by threonine 181. The G3 motif stretch occupies residues 196–205; sequence FKMFDVGGQR. At glutamine 204 the chain carries Deamidated glutamine; by Photorhabdus PAU_02230. Residues 265 to 272 form a G4 motif region; sequence ILFLNKKD. 7 residues coordinate GTP: asparagine 269, lysine 270, aspartate 272, leucine 273, cysteine 325, alanine 326, and threonine 327. Residues asparagine 269, lysine 270, and aspartate 272 each contribute to the GDP site. Residues 324-329 are G5 motif; that stretch reads TCATDT. GDP is bound by residues cysteine 325 and alanine 326. Cysteine 351 is subject to ADP-ribosylcysteine; by pertussis toxin.

It belongs to the G-alpha family. G(i/o/t/z) subfamily. As to quaternary structure, heterotrimeric G proteins are composed of 3 units; alpha, beta and gamma. The alpha subunit contains the guanine nucleotide binding site. GTP binding causes dissociation of the heterotrimer, liberating the individual subunits so that they can interact with downstream effector proteins. Forms a complex with CCDC88A/GIV and EGFR which leads to enhanced EGFR signaling and triggering of cell migration; ligand stimulation is required for recruitment of GNAI3 to the complex. Interacts (inactive GDP-bound form) with CCDC88A/GIV (via GBA motif); the interaction leads to activation of GNAI3. Interacts (inactive GDP-bound form) with CCDC88C/DAPLE (via GBA motif); the interaction leads to activation of GNAI3. Interacts (inactive GDP-bound form) with NUCB1 (via GBA motif) and NUCB2 (via GBA motif); the interaction leads to activation of GNAI3. Interacts (inactive GDP-bound form) with PLCD4 (via GBA motif); the interaction leads to activation of GNAI3. Interacts with INSR; the interaction is probably mediated by CCDC88A/GIV. Interacts with GPSM1. Interacts (GDP-bound form) with GPSM2 (via GoLoco domains). Does not interact with RGS2. Interacts with RGS8 and RGS10; this strongly enhances the intrinsic GTPase activity. Interacts with RGS16; this strongly enhances the intrinsic GTPase activity. Interacts with RGS12. Interacts (via active GTP- or inactive GDP-bound form) with RGS14. Interacts (via active GTP-bound form) with TRPC5 (via ANK repeats) in a homotetrameric ion channel; the interaction is direct and activates the channel activity. (Microbial infection) Deamidated at Gln-204 by Photorhabdus asymbiotica toxin PAU_02230, blocking GTP hydrolysis of heterotrimeric GNAQ or GNA11 and G-alphai (GNAI1, GNAI2 or GNAI3) proteins, thereby activating RhoA.

It localises to the cytoplasm. It is found in the cell membrane. The protein resides in the cytoskeleton. Its subcellular location is the microtubule organizing center. The protein localises to the centrosome. Its function is as follows. Heterotrimeric guanine nucleotide-binding proteins (G proteins) function as transducers downstream of G protein-coupled receptors (GPCRs) in numerous signaling cascades. The alpha chain contains the guanine nucleotide binding site and alternates between an active, GTP-bound state and an inactive, GDP-bound state. Signaling by an activated GPCR promotes GDP release and GTP binding. The alpha subunit has a low GTPase activity that converts bound GTP to GDP, thereby terminating the signal. Both GDP release and GTP hydrolysis are modulated by numerous regulatory proteins. Signaling is mediated via effector proteins, such as adenylate cyclase. Inhibits adenylate cyclase activity, leading to decreased intracellular cAMP levels. Stimulates the activity of receptor-regulated K(+) channels. The active GTP-bound form prevents the association of RGS14 with centrosomes and is required for the translocation of RGS14 from the cytoplasm to the plasma membrane. May play a role in cell division. The active GTP-bound form activates the calcium permeant TRPC5 ion channels. The protein is Guanine nucleotide-binding protein G(i) subunit alpha-3 (GNAI3) of Homo sapiens (Human).